A 336-amino-acid chain; its full sequence is UDP-3-O-acylglucosamine N-acyltransferase (336 aa).

Catalysis depends on His233, which acts as the Proton acceptor.

This sequence belongs to the transferase hexapeptide repeat family. LpxD subfamily. As to quaternary structure, homotrimer.

The catalysed reaction is a UDP-3-O-[(3R)-3-hydroxyacyl]-alpha-D-glucosamine + a (3R)-hydroxyacyl-[ACP] = a UDP-2-N,3-O-bis[(3R)-3-hydroxyacyl]-alpha-D-glucosamine + holo-[ACP] + H(+). It functions in the pathway bacterial outer membrane biogenesis; LPS lipid A biosynthesis. Catalyzes the N-acylation of UDP-3-O-acylglucosamine using 3-hydroxyacyl-ACP as the acyl donor. Is involved in the biosynthesis of lipid A, a phosphorylated glycolipid that anchors the lipopolysaccharide to the outer membrane of the cell. This Helicobacter pylori (strain J99 / ATCC 700824) (Campylobacter pylori J99) protein is UDP-3-O-acylglucosamine N-acyltransferase.